We begin with the raw amino-acid sequence, 983 residues long: Ephrin type-A receptor 3 (983 aa).

An N-terminal signal peptide occupies residues Met1 to Gly20. At Glu21 to Gln541 the chain is on the extracellular side. The region spanning Glu29 to Lys207 is the Eph LBD domain. N-linked (GlcNAc...) asparagine glycans are attached at residues Asn232, Asn337, Asn391, Asn404, and Asn493. Fibronectin type-III domains lie at Pro325–Ala435 and Ala436–Asp531. A helical transmembrane segment spans residues Val542–Gly565. Topologically, residues Arg566–Val983 are cytoplasmic. Phosphotyrosine; by autocatalysis occurs at positions 596 and 602. The Protein kinase domain maps to Ile621 to Ile882. ATP-binding positions include Gly628–Gly633, Lys653, and Glu700–Ser706. Tyr701 bears the Phosphotyrosine; by autocatalysis mark. Residue Asp746 is the Proton acceptor of the active site. Residue Arg750 to Asn751 participates in ATP binding. Phosphotyrosine; by autocatalysis is present on Tyr779. Residues Thr911 to Gln975 enclose the SAM domain. Tyr937 carries the post-translational modification Phosphotyrosine. A PDZ-binding motif is present at residues Val981–Val983.

The protein belongs to the protein kinase superfamily. Tyr protein kinase family. Ephrin receptor subfamily. In terms of assembly, heterotetramer upon binding of the ligand. The heterotetramer is composed of an ephrin dimer and a receptor dimer. Oligomerization is probably required to induce biological responses. Forms a ternary EFNA5-EPHA3-ADAM10 complex mediating EFNA5 extracellular domain shedding by ADAM10 which regulates the EFNA5-EPHA3 complex internalization and function. Interacts with NCK1 (via SH2 domain); mediates EFNA5-EPHA3 signaling. Interacts (phosphorylated) with PTPN1; dephosphorylates EPHA3 and may regulate its trafficking and function. Interacts (phosphorylated) with CRK; mediates EFNA5-EPHA3 signaling through RHOA GTPase activation. Autophosphorylates upon activation by EFNA5. Phosphorylation on Tyr-602 mediates interaction with NCK1. Dephosphorylated by PTPN1. In terms of tissue distribution, widely expressed. Highest level in placenta.

It is found in the cell membrane. It localises to the secreted. It catalyses the reaction L-tyrosyl-[protein] + ATP = O-phospho-L-tyrosyl-[protein] + ADP + H(+). In terms of biological role, receptor tyrosine kinase which binds promiscuously membrane-bound ephrin family ligands residing on adjacent cells, leading to contact-dependent bidirectional signaling into neighboring cells. The signaling pathway downstream of the receptor is referred to as forward signaling while the signaling pathway downstream of the ephrin ligand is referred to as reverse signaling. Highly promiscuous for ephrin-A ligands it binds preferentially EFNA5. Upon activation by EFNA5 regulates cell-cell adhesion, cytoskeletal organization and cell migration. Plays a role in cardiac cells migration and differentiation and regulates the formation of the atrioventricular canal and septum during development probably through activation by EFNA1. Involved in the retinotectal mapping of neurons. May also control the segregation but not the guidance of motor and sensory axons during neuromuscular circuit development. This Homo sapiens (Human) protein is Ephrin type-A receptor 3 (EPHA3).